A 481-amino-acid chain; its full sequence is Cobyric acid synthase (481 aa).

The GATase cobBQ-type domain occupies valine 244–alanine 431. Catalysis depends on cysteine 325, which acts as the Nucleophile. Residue histidine 423 is part of the active site.

This sequence belongs to the CobB/CobQ family. CobQ subfamily.

It participates in cofactor biosynthesis; adenosylcobalamin biosynthesis. Catalyzes amidations at positions B, D, E, and G on adenosylcobyrinic A,C-diamide. NH(2) groups are provided by glutamine, and one molecule of ATP is hydrogenolyzed for each amidation. The sequence is that of Cobyric acid synthase from Ralstonia nicotianae (strain ATCC BAA-1114 / GMI1000) (Ralstonia solanacearum).